A 364-amino-acid chain; its full sequence is MSLAGGRAPRKTAGNRLSGLLEKEEEDEFYQTTYGGFTEESGDDEYQGDQSDTEDEVDSDFDIDEGDEPSSDGEAEEPRRKRRVVTKAYKEPLKSLRPRKVSTPAGSSQKTREEKALLPLELQDDGTDSRKSMRQSTAEHTRQTFLRVQERQGQSRRRKGPHCERPLTQEELLREAKITEELNLRSLETYERLEADKKKQVHKKRKCPGPIITYHSVTVPLVGEPGPKEENVDVEGLDPAPMASALAARAGTGPVIPPARCSRTFITFSDDATFEEWFPQGRTPKIPVREVCPVTHRPALYRDPVTDIPYATARAFKIIREAYKKYITAHGLPPTASALGPGPPPPEPLPGSGPRALRQKIVIK.

Disordered regions lie at residues 1–164 and 335–357; these read MSLA…PHCE and TASA…PRAL. A compositionally biased stretch (acidic residues) spans 40-75; it reads ESGDDEYQGDQSDTEDEVDSDFDIDEGDEPSSDGEA. K115 participates in a covalent cross-link: Glycyl lysine isopeptide (Lys-Gly) (interchain with G-Cter in SUMO2). Positions 127-142 are enriched in basic and acidic residues; it reads TDSRKSMRQSTAEHTR. Position 129 is a phosphoserine (S129). Residues 156 to 206 mediate DNA binding; sequence RRRKGPHCERPLTQEELLREAKITEELNLRSLETYERLEADKKKQVHKKRK. The span at 341 to 351 shows a compositional bias: pro residues; sequence PGPPPPEPLPG.

The protein belongs to the VPS72/YL1 family. As to quaternary structure, component of the NuA4 histone acetyltransferase complex which contains the catalytic subunit KAT5/TIP60 and the subunits EP400, TRRAP/PAF400, BRD8/SMAP, EPC1, DMAP1/DNMAP1, RUVBL1/TIP49, RUVBL2, ING3, actin, ACTL6A/BAF53A, MORF4L1/MRG15, MORF4L2/MRGX, MRGBP, YEATS4/GAS41 and VPS72/YL1. Component of a NuA4-related complex which contains EP400, TRRAP/PAF400, SRCAP, BRD8/SMAP, EPC1, DMAP1/DNMAP1, RUVBL1/TIP49, RUVBL2, actin, ACTL6A/BAF53A, VPS72 and YEATS4/GAS41. Also part of a multiprotein complex which contains SRCAP and which binds to H2AZ1/H2AZ. Interacts (via N-terminal domain) with H2AZ1; the interaction is enhanced by VPS72 phosphorylation which is promoted by ZNHIT1. In terms of processing, phosphorylation is enhanced by ZNHIT1 and promotes the interaction of VPS72 with histone H2AZ1.

The protein localises to the nucleus. Functionally, deposition-and-exchange histone chaperone specific for H2AZ1, specifically chaperones H2AZ1 and deposits it into nucleosomes. As component of the SRCAP complex, mediates the ATP-dependent exchange of histone H2AZ1/H2B dimers for nucleosomal H2A/H2B, leading to transcriptional regulation of selected genes by chromatin remodeling. The polypeptide is Vacuolar protein sorting-associated protein 72 homolog (VPS72) (Bos taurus (Bovine)).